A 330-amino-acid chain; its full sequence is Methylthioribose-1-phosphate isomerase (330 aa).

Substrate contacts are provided by residues 49–51, Arg-83, and Gln-179; that span reads RGA. The Proton donor role is filled by Asp-220. Residue 230–231 coordinates substrate; it reads NK.

It belongs to the eIF-2B alpha/beta/delta subunits family. MtnA subfamily.

It carries out the reaction 5-(methylsulfanyl)-alpha-D-ribose 1-phosphate = 5-(methylsulfanyl)-D-ribulose 1-phosphate. It functions in the pathway amino-acid biosynthesis; L-methionine biosynthesis via salvage pathway; L-methionine from S-methyl-5-thio-alpha-D-ribose 1-phosphate: step 1/6. Its function is as follows. Catalyzes the interconversion of methylthioribose-1-phosphate (MTR-1-P) into methylthioribulose-1-phosphate (MTRu-1-P). This is Methylthioribose-1-phosphate isomerase from Thermus thermophilus (strain ATCC 27634 / DSM 579 / HB8).